Reading from the N-terminus, the 195-residue chain is dITP/XTP pyrophosphatase (195 aa).

A substrate-binding site is contributed by 8-13; it reads SNNQGK. Mg(2+) contacts are provided by Glu-39 and Asp-68. Asp-68 (proton acceptor) is an active-site residue. Residues Ser-69, 149–152, Lys-172, and 177–178 each bind substrate; these read FGYD and HR.

This sequence belongs to the HAM1 NTPase family. Homodimer. Mg(2+) is required as a cofactor.

The catalysed reaction is XTP + H2O = XMP + diphosphate + H(+). The enzyme catalyses dITP + H2O = dIMP + diphosphate + H(+). It catalyses the reaction ITP + H2O = IMP + diphosphate + H(+). In terms of biological role, pyrophosphatase that catalyzes the hydrolysis of nucleoside triphosphates to their monophosphate derivatives, with a high preference for the non-canonical purine nucleotides XTP (xanthosine triphosphate), dITP (deoxyinosine triphosphate) and ITP. Seems to function as a house-cleaning enzyme that removes non-canonical purine nucleotides from the nucleotide pool, thus preventing their incorporation into DNA/RNA and avoiding chromosomal lesions. The polypeptide is dITP/XTP pyrophosphatase (Staphylococcus aureus (strain MRSA252)).